Here is a 261-residue protein sequence, read N- to C-terminus: DNA repair protein RecO (261 aa).

It belongs to the RecO family.

Functionally, involved in DNA repair and RecF pathway recombination. The sequence is that of DNA repair protein RecO from Gloeobacter violaceus (strain ATCC 29082 / PCC 7421).